A 159-amino-acid polypeptide reads, in one-letter code: Na(+)/H(+) antiporter subunit E1 (159 aa).

4 helical membrane-spanning segments follow: residues 1-21 (MAIQ…LSGS), 27-47 (LLLG…ILPG), 49-69 (FYFI…VELL), and 101-121 (WQIV…VLGI).

This sequence belongs to the CPA3 antiporters (TC 2.A.63) subunit E family. In terms of assembly, may form a heterooligomeric complex that consists of seven subunits: mnhA1, mnhB1, mnhC1, mnhD1, mnhE1, mnhF1 and mnhG1.

The protein localises to the cell membrane. In terms of biological role, mnh complex is a Na(+)/H(+) antiporter involved in Na(+) excretion. This is Na(+)/H(+) antiporter subunit E1 (mnhE1) from Staphylococcus haemolyticus (strain JCSC1435).